A 937-amino-acid polypeptide reads, in one-letter code: Isoleucine--tRNA ligase (937 aa).

A 'HIGH' region motif is present at residues 58-68 (PYANGDIHIGH). E561 contributes to the L-isoleucyl-5'-AMP binding site. The 'KMSKS' region signature appears at 602-606 (KMSKS). K605 contacts ATP. Residues C900, C903, C920, and C923 each contribute to the Zn(2+) site.

This sequence belongs to the class-I aminoacyl-tRNA synthetase family. IleS type 1 subfamily. In terms of assembly, monomer. Zn(2+) serves as cofactor.

The protein localises to the cytoplasm. The catalysed reaction is tRNA(Ile) + L-isoleucine + ATP = L-isoleucyl-tRNA(Ile) + AMP + diphosphate. In terms of biological role, catalyzes the attachment of isoleucine to tRNA(Ile). As IleRS can inadvertently accommodate and process structurally similar amino acids such as valine, to avoid such errors it has two additional distinct tRNA(Ile)-dependent editing activities. One activity is designated as 'pretransfer' editing and involves the hydrolysis of activated Val-AMP. The other activity is designated 'posttransfer' editing and involves deacylation of mischarged Val-tRNA(Ile). The polypeptide is Isoleucine--tRNA ligase (Alcanivorax borkumensis (strain ATCC 700651 / DSM 11573 / NCIMB 13689 / SK2)).